A 469-amino-acid polypeptide reads, in one-letter code: MNNSEQFLSPRMGRVEQIHFVGIGGAGMCGIAEVLHNQGYRITGSDLGESGTVQRLRSLGIQVYIGHRLENIKGADVVVRSSAVDFNNPEIVAARELMIPVIPRAAMLAELMRFRHGIAIAGTHGKTTTTSLVSSLLAEGGLDPSFVIGGKLNSCGANAQLGKSAYFVVEADESDASFLFLKPMMAVVTNIDADHMDTYEGDFEKLRTTFLEFLHHLPFYGLAVVCLEDEEICRILPAIQRPTLTYGFKEEAHYRAINWTQKGMLSEFVVVRPAPHKQLTIQFQYPGRHNVLNALASIAIATELGVDDDSIVRGLQKFQGVGRRFQMLGEKQFEKGAAIIVDDYGHHPQEILSTIDAFRRVWPERRLVHVFQPHRYTRTQSLHRQFVDVLSLSDELLLMDIYAAGETAIPGVTSENLANEIRSRDKRVTIVSEQSLKATLDEFIKDGDVILMQGAGSIGQIAVNLMKNM.

G122 to T128 provides a ligand contact to ATP.

Belongs to the MurCDEF family.

It localises to the cytoplasm. It catalyses the reaction UDP-N-acetyl-alpha-D-muramate + L-alanine + ATP = UDP-N-acetyl-alpha-D-muramoyl-L-alanine + ADP + phosphate + H(+). It participates in cell wall biogenesis; peptidoglycan biosynthesis. Cell wall formation. The chain is UDP-N-acetylmuramate--L-alanine ligase from Legionella pneumophila subsp. pneumophila (strain Philadelphia 1 / ATCC 33152 / DSM 7513).